Here is a 534-residue protein sequence, read N- to C-terminus: Cysteine/serine-rich nuclear protein 2 (534 aa).

Methionine 1 carries the post-translational modification N-acetylmethionine. 2 disordered regions span residues 1–52 and 480–534; these read MDAF…FTPT and DCGL…PLAV. The segment covering 31–40 has biased composition (low complexity); that stretch reads SSDSADSCDS. Polar residues predominate over residues 42-52; the sequence is NPPTTASFTPT. Positions 480-492 are enriched in basic and acidic residues; sequence DCGLKEPESEDLH.

The protein belongs to the AXUD1 family. As to expression, highest expression detected in thymus, brain and ovary. Low levels detected in naive T-cells.

The protein localises to the nucleus. Binds to the consensus sequence 5'-AGAGTG-3' and has transcriptional activator activity. May play a role in apoptosis. The chain is Cysteine/serine-rich nuclear protein 2 (Csrnp2) from Mus musculus (Mouse).